Here is a 265-residue protein sequence, read N- to C-terminus: Beta-lactamase OXA-48 (265 aa).

Residues 1–22 form the signal peptide; sequence MRVLALSAVFLVASIIGMPAVA. Serine 70 functions as the Acyl-ester intermediate in the catalytic mechanism. Residues serine 70, lysine 73, serine 118, and arginine 250 each contribute to the a beta-lactam site. N6-carboxylysine is present on lysine 73.

Belongs to the class-D beta-lactamase family. Monomer. Dimer. Carboxylated on the epsilon-amino group of a lysine, with the resulting carbamate functional group serving as a general base. Probably N-carboxylated at Lys-73 at neutral pH in vivo and undergoes complete N-decarboxylation, at pH 4.1, in vitro.

It carries out the reaction a beta-lactam + H2O = a substituted beta-amino acid. Its activity is regulated as follows. Inhibited by avibactam, related diazabicyclooctane (DBO) derivatives and by bicyclic boronic acids, via a covalent binding to Ser-70. Inhibited by chloride, bromide and iodide ions. Not inhibited by the beta-lactamase-blocking agents, clavulanic acid or tazobactam. Functionally, class D beta-lactamase which confers resistance to the beta-lactam antibiotics, including amoxicillin, and moderate resistance to cephalosporins and carbapenems such as cephalothin and imipenem; in the DH10B strain of E.coli. Acts via hydrolysis of the beta-lactam ring. Has oxacillin-, cephalothin- and imipenem-hydrolyzing activities. The protein is Beta-lactamase OXA-48 of Klebsiella pneumoniae.